A 461-amino-acid chain; its full sequence is Argininosuccinate lyase (461 aa).

Belongs to the lyase 1 family. Argininosuccinate lyase subfamily.

It localises to the cytoplasm. The enzyme catalyses 2-(N(omega)-L-arginino)succinate = fumarate + L-arginine. It functions in the pathway amino-acid biosynthesis; L-arginine biosynthesis; L-arginine from L-ornithine and carbamoyl phosphate: step 3/3. In Limosilactobacillus reuteri subsp. reuteri (strain JCM 1112) (Lactobacillus reuteri), this protein is Argininosuccinate lyase.